The following is a 268-amino-acid chain: Secreted RxLR effector protein 6 (268 aa).

An N-terminal signal peptide occupies residues 1 to 19; sequence MRGAFYIAIALLVVRSRTA. A RxLR-dEER motif is present at residues 48–63; the sequence is RYLRDGLAHSAANEER. The interval 90 to 123 is disordered; that stretch reads IGGHSHTPKSKRKVNLSPAKSQSGIRKKSTSINK. The segment covering 107–123 has biased composition (polar residues); the sequence is PAKSQSGIRKKSTSINK.

This sequence belongs to the RxLR effector family.

Its subcellular location is the secreted. The protein resides in the host nucleus. It is found in the host cytoplasm. Functionally, secreted effector that completely suppresses the host cell death induced by cell death-inducing proteins. This is Secreted RxLR effector protein 6 from Plasmopara viticola (Downy mildew of grapevine).